The chain runs to 147 residues: MSSEPPPPPQPPTHQASVGLLDTPRSRERSPSPLRGNVVPSPLPTRRTRTFSATVRASQGPVYKGVCKCFCRSKGHGFITPADGGPDIFLHISDVEGEYVPVEGDEVTYKMCSIPPKNEKLQAVEVVITHLAPGTKHETWSGHVISS.

The span at 1–12 (MSSEPPPPPQPP) shows a compositional bias: pro residues. The segment at 1 to 52 (MSSEPPPPPQPPTHQASVGLLDTPRSRERSPSPLRGNVVPSPLPTRRTRTFS) is disordered. Serine 2 carries the N-acetylserine modification. Serine 30, serine 32, and serine 41 each carry phosphoserine. A Phosphothreonine modification is found at threonine 45. 2 positions are modified to phosphoserine: serine 52 and serine 58. The CSD domain maps to 62-129 (VYKGVCKCFC…KLQAVEVVIT (68 aa)). Phosphoserine is present on residues serine 146 and serine 147.

Homodimer. Interacts with STYX. In terms of processing, dephosphorylated by calcineurin in a Ca(2+) dependent manner. Can be phosphorylated by DYRK2 (in vitro).

It is found in the cytoplasm. The protein localises to the P-body. It localises to the cytoplasmic granule. Functionally, binds mRNA and regulates the stability of target mRNA. Binds single-stranded DNA (in vitro). This is Calcium-regulated heat-stable protein 1 (CARHSP1) from Homo sapiens (Human).